A 231-amino-acid polypeptide reads, in one-letter code: tRNA (guanine-N(7)-)-methyltransferase (231 aa).

Positions 57, 82, 109, and 132 each coordinate S-adenosyl-L-methionine. Asp132 is an active-site residue. Residues Lys136, Asp168, and 205–208 contribute to the substrate site; that span reads TKFE. A disordered region spans residues 194-214; that stretch reads AFVPPPPPRPQTKFERRGLRK.

Belongs to the class I-like SAM-binding methyltransferase superfamily. TrmB family.

The catalysed reaction is guanosine(46) in tRNA + S-adenosyl-L-methionine = N(7)-methylguanosine(46) in tRNA + S-adenosyl-L-homocysteine. It functions in the pathway tRNA modification; N(7)-methylguanine-tRNA biosynthesis. Its function is as follows. Catalyzes the formation of N(7)-methylguanine at position 46 (m7G46) in tRNA. The polypeptide is tRNA (guanine-N(7)-)-methyltransferase (Halorhodospira halophila (strain DSM 244 / SL1) (Ectothiorhodospira halophila (strain DSM 244 / SL1))).